Reading from the N-terminus, the 122-residue chain is Small ribosomal subunit protein uS13c (122 aa).

Residues 102 to 122 (RTRTNARTRRGAKKTVAGKKK) are disordered.

It belongs to the universal ribosomal protein uS13 family. Part of the 30S ribosomal subunit.

It localises to the plastid. It is found in the chloroplast. Located at the top of the head of the 30S subunit, it contacts several helices of the 16S rRNA. In Guillardia theta (Cryptophyte), this protein is Small ribosomal subunit protein uS13c.